Here is a 215-residue protein sequence, read N- to C-terminus: NADH-quinone oxidoreductase subunit C (215 aa).

Belongs to the complex I 30 kDa subunit family. NDH-1 is composed of 14 different subunits. Subunits NuoB, C, D, E, F, and G constitute the peripheral sector of the complex.

The protein resides in the cell inner membrane. It catalyses the reaction a quinone + NADH + 5 H(+)(in) = a quinol + NAD(+) + 4 H(+)(out). Functionally, NDH-1 shuttles electrons from NADH, via FMN and iron-sulfur (Fe-S) centers, to quinones in the respiratory chain. The immediate electron acceptor for the enzyme in this species is believed to be ubiquinone. Couples the redox reaction to proton translocation (for every two electrons transferred, four hydrogen ions are translocated across the cytoplasmic membrane), and thus conserves the redox energy in a proton gradient. The protein is NADH-quinone oxidoreductase subunit C of Bordetella parapertussis (strain 12822 / ATCC BAA-587 / NCTC 13253).